The following is a 95-amino-acid chain: ESAT-6-like protein EsxC (95 aa).

This sequence belongs to the WXG100 family. ESAT-6 subfamily.

It localises to the secreted. This Mycobacterium tuberculosis (strain CDC 1551 / Oshkosh) protein is ESAT-6-like protein EsxC.